Reading from the N-terminus, the 344-residue chain is DNA integrity scanning protein DisA (344 aa).

Residues 1–133 (MALLAPGTPI…GRRYLIERPE (133 aa)) enclose the DAC domain. Residues Gly61 and 92–96 (TRHRT) contribute to the ATP site.

Belongs to the DisA family. In terms of assembly, homooctamer. Requires Mg(2+) as cofactor.

The enzyme catalyses 2 ATP = 3',3'-c-di-AMP + 2 diphosphate. Participates in a DNA-damage check-point. DisA forms globular foci that rapidly scan along the chromosomes searching for lesions. In terms of biological role, also has diadenylate cyclase activity, catalyzing the condensation of 2 ATP molecules into cyclic di-AMP (c-di-AMP). c-di-AMP likely acts as a signaling molecule that may couple DNA integrity with a cellular process. The sequence is that of DNA integrity scanning protein DisA from Cutibacterium acnes (strain DSM 16379 / KPA171202) (Propionibacterium acnes).